Here is a 145-residue protein sequence, read N- to C-terminus: 3-hydroxyacyl-[acyl-carrier-protein] dehydratase FabZ (145 aa).

H49 is a catalytic residue.

It belongs to the thioester dehydratase family. FabZ subfamily.

Its subcellular location is the cytoplasm. The enzyme catalyses a (3R)-hydroxyacyl-[ACP] = a (2E)-enoyl-[ACP] + H2O. Functionally, involved in unsaturated fatty acids biosynthesis. Catalyzes the dehydration of short chain beta-hydroxyacyl-ACPs and long chain saturated and unsaturated beta-hydroxyacyl-ACPs. This is 3-hydroxyacyl-[acyl-carrier-protein] dehydratase FabZ from Rickettsia peacockii (strain Rustic).